We begin with the raw amino-acid sequence, 425 residues long: Glucan 1,3-beta-glucosidase (425 aa).

Positions 1–17 are cleaved as a signal peptide; that stretch reads MLLTFAPIFLLISSIVA. E214 acts as the Proton donor in catalysis. 2 disulfide bridges follow: C301/C423 and C326/C352. The active-site Nucleophile is the K328.

This sequence belongs to the glycosyl hydrolase 5 (cellulase A) family.

The protein resides in the secreted. It carries out the reaction Successive hydrolysis of beta-D-glucose units from the non-reducing ends of (1-&gt;3)-beta-D-glucans, releasing alpha-glucose.. Its function is as follows. Beta-glucanases participate in the metabolism of beta-glucan, the main structural component of the cell wall. It could also function biosynthetically as a transglycosylase. The protein is Glucan 1,3-beta-glucosidase (EXG1) of Candida oleophila (Yeast).